The chain runs to 282 residues: Phosphatidylserine decarboxylase proenzyme (282 aa).

Catalysis depends on charge relay system; for autoendoproteolytic cleavage activity residues Asp89, His145, and Ser249. The active-site Schiff-base intermediate with substrate; via pyruvic acid; for decarboxylase activity is Ser249. Ser249 bears the Pyruvic acid (Ser); by autocatalysis mark.

This sequence belongs to the phosphatidylserine decarboxylase family. PSD-B subfamily. Prokaryotic type I sub-subfamily. As to quaternary structure, heterodimer of a large membrane-associated beta subunit and a small pyruvoyl-containing alpha subunit. Pyruvate serves as cofactor. Is synthesized initially as an inactive proenzyme. Formation of the active enzyme involves a self-maturation process in which the active site pyruvoyl group is generated from an internal serine residue via an autocatalytic post-translational modification. Two non-identical subunits are generated from the proenzyme in this reaction, and the pyruvate is formed at the N-terminus of the alpha chain, which is derived from the carboxyl end of the proenzyme. The autoendoproteolytic cleavage occurs by a canonical serine protease mechanism, in which the side chain hydroxyl group of the serine supplies its oxygen atom to form the C-terminus of the beta chain, while the remainder of the serine residue undergoes an oxidative deamination to produce ammonia and the pyruvoyl prosthetic group on the alpha chain. During this reaction, the Ser that is part of the protease active site of the proenzyme becomes the pyruvoyl prosthetic group, which constitutes an essential element of the active site of the mature decarboxylase.

It is found in the cell membrane. The catalysed reaction is a 1,2-diacyl-sn-glycero-3-phospho-L-serine + H(+) = a 1,2-diacyl-sn-glycero-3-phosphoethanolamine + CO2. The protein operates within phospholipid metabolism; phosphatidylethanolamine biosynthesis; phosphatidylethanolamine from CDP-diacylglycerol: step 2/2. Functionally, catalyzes the formation of phosphatidylethanolamine (PtdEtn) from phosphatidylserine (PtdSer). The sequence is that of Phosphatidylserine decarboxylase proenzyme from Anaeromyxobacter sp. (strain K).